Consider the following 186-residue polypeptide: Dynactin subunit 3 (186 aa).

The residue at position 2 (Ala2) is an N-acetylalanine. Residues 135–157 adopt a coiled-coil conformation; sequence QQQDQCVEITEESKALLEEYNKT.

It belongs to the dynactin subunit 3 family. Subunit of dynactin, a multiprotein complex part of a tripartite complex with dynein and a adapter, such as BICDL1, BICD2 or HOOK3. The dynactin complex is built around ACTR1A/ACTB filament and consists of an actin-related filament composed of a shoulder domain, a pointed end and a barbed end. Its length is defined by its flexible shoulder domain. The soulder is composed of 2 DCTN1 subunits, 4 DCTN2 and 2 DCTN3. The 4 DCNT2 (via N-terminus) bind the ACTR1A filament and act as molecular rulers to determine the length. The pointed end is important for binding dynein-dynactin cargo adapters. Consists of 4 subunits: ACTR10, DCNT4, DCTN5 and DCTN6. The barbed end is composed of a CAPZA1:CAPZB heterodimers, which binds ACTR1A/ACTB filament and dynactin and stabilizes dynactin. In terms of tissue distribution, ubiquitously expressed. Highly expressed in muscle and pancreas and detected at lower levels in brain.

It localises to the cytoplasm. The protein localises to the cytoskeleton. Its subcellular location is the microtubule organizing center. The protein resides in the centrosome. It is found in the chromosome. It localises to the centromere. The protein localises to the kinetochore. Its subcellular location is the spindle. The protein resides in the cleavage furrow. It is found in the midbody. Its function is as follows. Part of the dynactin complex that activates the molecular motor dynein for ultra-processive transport along microtubules. Together with dynein may be involved in spindle assembly and cytokinesis. This is Dynactin subunit 3 from Homo sapiens (Human).